The following is a 234-amino-acid chain: 2-C-methyl-D-erythritol 4-phosphate cytidylyltransferase (234 aa).

The protein belongs to the IspD/TarI cytidylyltransferase family. IspD subfamily.

It carries out the reaction 2-C-methyl-D-erythritol 4-phosphate + CTP + H(+) = 4-CDP-2-C-methyl-D-erythritol + diphosphate. The protein operates within isoprenoid biosynthesis; isopentenyl diphosphate biosynthesis via DXP pathway; isopentenyl diphosphate from 1-deoxy-D-xylulose 5-phosphate: step 2/6. Functionally, catalyzes the formation of 4-diphosphocytidyl-2-C-methyl-D-erythritol from CTP and 2-C-methyl-D-erythritol 4-phosphate (MEP). The sequence is that of 2-C-methyl-D-erythritol 4-phosphate cytidylyltransferase from Photobacterium profundum (strain SS9).